The primary structure comprises 104 residues: UPF0145 protein Hlac_1015 (104 aa).

This sequence belongs to the UPF0145 family.

This chain is UPF0145 protein Hlac_1015, found in Halorubrum lacusprofundi (strain ATCC 49239 / DSM 5036 / JCM 8891 / ACAM 34).